We begin with the raw amino-acid sequence, 321 residues long: Mitochondrial coenzyme A transporter SLC25A42 (321 aa).

3 Solcar repeats span residues 33–119, 131–216, and 226–314; these read RSVL…YKGI, LPPV…LKKT, and PFPY…TQIL. Transmembrane regions (helical) follow at residues 35–55, 91–111, 137–154, 191–208, 232–252, and 295–315; these read VLNS…AVAP, LWRG…IQFC, LLAG…TYPL, GFTP…LSFF, LVFG…LDVV, and VKGP…QILL.

It belongs to the mitochondrial carrier (TC 2.A.29) family.

It localises to the mitochondrion inner membrane. The enzyme catalyses ADP(out) + CoA(in) = ADP(in) + CoA(out). It catalyses the reaction 3'-dephospho-CoA(in) + ADP(out) = 3'-dephospho-CoA(out) + ADP(in). It carries out the reaction adenosine 3',5'-bisphosphate(in) + ADP(out) = adenosine 3',5'-bisphosphate(out) + ADP(in). The catalysed reaction is AMP(in) + ADP(out) = AMP(out) + ADP(in). The enzyme catalyses dADP(in) + ADP(out) = dADP(out) + ADP(in). It catalyses the reaction ADP(in) + ATP(out) = ADP(out) + ATP(in). Functionally, mitochondrial carrier mediating the transport of coenzyme A (CoA) in mitochondria in exchange for intramitochondrial (deoxy)adenine nucleotides and adenosine 3',5'-diphosphate. The protein is Mitochondrial coenzyme A transporter SLC25A42 (slc25a42) of Danio rerio (Zebrafish).